Reading from the N-terminus, the 304-residue chain is Cbb3-type cytochrome c oxidase subunit CcoP (304 aa).

Transmembrane regions (helical) follow at residues 11–31 (LYVA…LIVA) and 61–81 (WWAG…ALYP). 2 consecutive Cytochrome c domains span residues 129 to 209 (QAMA…LSLS) and 216 to 296 (VAAQ…WSLS). 8 residues coordinate heme c: Cys142, Cys145, His146, Met185, Cys228, Cys231, His232, and Met273.

It belongs to the CcoP / FixP family. As to quaternary structure, component of the cbb3-type cytochrome c oxidase at least composed of CcoN, CcoO, CcoQ and CcoP. It depends on heme c as a cofactor.

Its subcellular location is the cell inner membrane. The protein operates within energy metabolism; oxidative phosphorylation. Its function is as follows. C-type cytochrome. Part of the cbb3-type cytochrome c oxidase complex. CcoP subunit is required for transferring electrons from donor cytochrome c via its heme groups to CcoO subunit. From there, electrons are shuttled to the catalytic binuclear center of CcoN subunit where oxygen reduction takes place. The complex also functions as a proton pump. The chain is Cbb3-type cytochrome c oxidase subunit CcoP from Rubrivivax gelatinosus (Rhodocyclus gelatinosus).